Consider the following 316-residue polypeptide: tRNA methyltransferase 10 homolog B (316 aa).

A coiled-coil region spans residues 73-97 (EKIVAAKKSKRKQEKERRKANRAEN). The tract at residues 77–98 (AAKKSKRKQEKERRKANRAENP) is disordered. The SAM-dependent MTase TRM10-type domain occupies 113 to 310 (TKDKLLEAKH…KGVSSGKGYI (198 aa)).

It belongs to the class IV-like SAM-binding methyltransferase superfamily. TRM10 family.

It catalyses the reaction guanosine(9) in tRNA + S-adenosyl-L-methionine = N(1)-methylguanosine(9) in tRNA + S-adenosyl-L-homocysteine + H(+). S-adenosyl-L-methionine-dependent guanine N(1)-methyltransferase that catalyzes the formation of N(1)-methylguanine at position 9 (m1G9) in tRNAs. Probably not able to catalyze formation of N(1)-methyladenine at position 9 (m1A9) in tRNAs. This Homo sapiens (Human) protein is tRNA methyltransferase 10 homolog B (TRMT10B).